The primary structure comprises 186 residues: Lipoprotein signal peptidase (186 aa).

The next 3 helical transmembrane spans lie at 11–31 (WIPLFAAGLVVVLDQCAKLLV), 44–64 (VLGDFVRIVHVYNVGAAFSIG), and 70–90 (VLRTLVLGIVPLIIMFLIVFS). Active-site residues include Asp-128 and Asp-150. A helical transmembrane segment spans residues 145-165 (AFNIADAVIMTCGLLLIISFI).

It belongs to the peptidase A8 family.

The protein localises to the cell inner membrane. The catalysed reaction is Release of signal peptides from bacterial membrane prolipoproteins. Hydrolyzes -Xaa-Yaa-Zaa-|-(S,diacylglyceryl)Cys-, in which Xaa is hydrophobic (preferably Leu), and Yaa (Ala or Ser) and Zaa (Gly or Ala) have small, neutral side chains.. Its pathway is protein modification; lipoprotein biosynthesis (signal peptide cleavage). This protein specifically catalyzes the removal of signal peptides from prolipoproteins. This Treponema pallidum (strain Nichols) protein is Lipoprotein signal peptidase.